Consider the following 558-residue polypeptide: Membrane protein insertase YidC (558 aa).

The next 6 helical transmembrane spans lie at 5 to 25 (IINL…WQYF), 332 to 352 (AIDF…MNFF), 355 to 375 (YVGN…LLMF), 429 to 449 (LPIL…YVTI), 474 to 494 (LFGL…WPIL), and 520 to 540 (FMPL…LIYW).

Belongs to the OXA1/ALB3/YidC family. Type 1 subfamily. As to quaternary structure, interacts with the Sec translocase complex via SecD. Specifically interacts with transmembrane segments of nascent integral membrane proteins during membrane integration.

It localises to the cell inner membrane. Required for the insertion and/or proper folding and/or complex formation of integral membrane proteins into the membrane. Involved in integration of membrane proteins that insert both dependently and independently of the Sec translocase complex, as well as at least some lipoproteins. Aids folding of multispanning membrane proteins. The sequence is that of Membrane protein insertase YidC from Rickettsia typhi (strain ATCC VR-144 / Wilmington).